The following is a 1253-amino-acid chain: Cytoplasmic FMR1-interacting protein 2 (1253 aa).

Lys1037 carries the post-translational modification N6-acetyllysine.

Belongs to the CYFIP family. Component of the WAVE1 complex composed of ABI2, CYFIP2, BRK1, NCKAP1 and WASF1/WAVE1. Interacts with RAC1 (activated form) which causes the complex to dissociate, releasing activated WASF1. The complex can also be activated by NCK1. Interacts with SHANK3; the interaction mediates the association of SHANK3 with the WAVE1 complex. Interacts with FMR1; the interaction occurs in a RNA-dependent manner. Interacts with FXR1 and FXR2. Interacts with TMEM108 (via N-terminus); the interaction associates TMEM108 with the WAVE1 complex.

The protein localises to the cytoplasm. Its subcellular location is the nucleus. The protein resides in the perinuclear region. It localises to the synapse. It is found in the synaptosome. Functionally, involved in T-cell adhesion and p53-dependent induction of apoptosis. Does not bind RNA. As component of the WAVE1 complex, required for BDNF-NTRK2 endocytic trafficking and signaling from early endosomes. This Pongo abelii (Sumatran orangutan) protein is Cytoplasmic FMR1-interacting protein 2.